A 177-amino-acid polypeptide reads, in one-letter code: Ribosome maturation factor RimP (177 aa).

Residues 153–171 (VEFNRKDTKNDNQTEHDNK) show a composition bias toward basic and acidic residues. The interval 153-177 (VEFNRKDTKNDNQTEHDNKTEEEEA) is disordered.

It belongs to the RimP family.

The protein resides in the cytoplasm. Its function is as follows. Required for maturation of 30S ribosomal subunits. This is Ribosome maturation factor RimP from Streptomyces coelicolor (strain ATCC BAA-471 / A3(2) / M145).